A 714-amino-acid polypeptide reads, in one-letter code: DNA ligase (714 aa).

Residues 47–51, 96–97, and Glu130 each bind NAD(+); these read DAAYD and SL. Residue Lys132 is the N6-AMP-lysine intermediate of the active site. The NAD(+) site is built by Arg153, Glu190, Lys306, and Lys330. Zn(2+) is bound by residues Cys435, Cys438, Cys453, and Cys459. Residues 636–714 enclose the BRCT domain; it reads RNDSAVAGKT…EDEWLKLIEG (79 aa).

It belongs to the NAD-dependent DNA ligase family. LigA subfamily. Mg(2+) is required as a cofactor. Requires Mn(2+) as cofactor.

It catalyses the reaction NAD(+) + (deoxyribonucleotide)n-3'-hydroxyl + 5'-phospho-(deoxyribonucleotide)m = (deoxyribonucleotide)n+m + AMP + beta-nicotinamide D-nucleotide.. Functionally, DNA ligase that catalyzes the formation of phosphodiester linkages between 5'-phosphoryl and 3'-hydroxyl groups in double-stranded DNA using NAD as a coenzyme and as the energy source for the reaction. It is essential for DNA replication and repair of damaged DNA. This Nitrobacter hamburgensis (strain DSM 10229 / NCIMB 13809 / X14) protein is DNA ligase.